A 207-amino-acid polypeptide reads, in one-letter code: Lipid A acyltransferase PagP (207 aa).

The N-terminal stretch at 1 to 24 (MKFDLTAACTLSATLLVSSGTVFA) is a signal peptide. Residues histidine 79, aspartate 122, and serine 123 contribute to the active site.

This sequence belongs to the lipid A palmitoyltransferase family. In terms of assembly, homodimer.

It localises to the cell outer membrane. It catalyses the reaction a lipid A + a 1,2-diacyl-sn-glycero-3-phosphocholine = a hepta-acyl lipid A + a 2-acyl-sn-glycero-3-phosphocholine. The catalysed reaction is a lipid IVA + a 1,2-diacyl-sn-glycero-3-phosphocholine = a lipid IVB + a 2-acyl-sn-glycero-3-phosphocholine. It carries out the reaction a lipid IIA + a 1,2-diacyl-sn-glycero-3-phosphocholine = a lipid IIB + a 2-acyl-sn-glycero-3-phosphocholine. Functionally, transfers a fatty acid residue from the sn-1 position of a phospholipid to the N-linked hydroxyfatty acid chain on the proximal unit of lipid A or its precursors. This chain is Lipid A acyltransferase PagP, found in Photorhabdus laumondii subsp. laumondii (strain DSM 15139 / CIP 105565 / TT01) (Photorhabdus luminescens subsp. laumondii).